A 94-amino-acid chain; its full sequence is Translation initiation factor 1A 2 (94 aa).

In terms of domain architecture, S1-like spans 6 to 80; it reads GRRNLRMPND…EKANVEWRYS (75 aa).

Belongs to the eIF-1A family.

Functionally, seems to be required for maximal rate of protein biosynthesis. Enhances ribosome dissociation into subunits and stabilizes the binding of the initiator Met-tRNA(I) to 40 S ribosomal subunits. This is Translation initiation factor 1A 2 (eIF1A2) from Halobacterium salinarum (strain ATCC 700922 / JCM 11081 / NRC-1) (Halobacterium halobium).